The primary structure comprises 436 residues: Serine--tRNA ligase (436 aa).

Residues threonine 43–valine 55 show a composition bias toward basic and acidic residues. A disordered region spans residues threonine 43–aspartate 68. Threonine 237–glutamate 239 contributes to the L-serine binding site. Residue arginine 268–glutamate 270 participates in ATP binding. Glutamate 291 contacts L-serine. Residue glutamate 355–serine 358 coordinates ATP. Serine 390 lines the L-serine pocket.

The protein belongs to the class-II aminoacyl-tRNA synthetase family. Type-1 seryl-tRNA synthetase subfamily. Homodimer. The tRNA molecule binds across the dimer.

Its subcellular location is the cytoplasm. The enzyme catalyses tRNA(Ser) + L-serine + ATP = L-seryl-tRNA(Ser) + AMP + diphosphate + H(+). It carries out the reaction tRNA(Sec) + L-serine + ATP = L-seryl-tRNA(Sec) + AMP + diphosphate + H(+). Its pathway is aminoacyl-tRNA biosynthesis; selenocysteinyl-tRNA(Sec) biosynthesis; L-seryl-tRNA(Sec) from L-serine and tRNA(Sec): step 1/1. Catalyzes the attachment of serine to tRNA(Ser). Is also able to aminoacylate tRNA(Sec) with serine, to form the misacylated tRNA L-seryl-tRNA(Sec), which will be further converted into selenocysteinyl-tRNA(Sec). The chain is Serine--tRNA ligase from Lactobacillus johnsonii (strain CNCM I-12250 / La1 / NCC 533).